The primary structure comprises 181 residues: MSRIKKARKPGMSSQPVVVTRNRTDRDVESREIKRKRKRKGLKAGARNAESNAEQARRNAQKKDPRIGSKKPIQLVVEAKQKTTKQERRLTNEQELAMLENDAQLMVLLDRLDSGENLGTGLQKYVDEKLARIEHLMGRLGLLDDEEPEEIEEFPEFAERKAKSDDDLLAEFDDFNMDDFK.

The segment at 1–73 is disordered; that stretch reads MSRIKKARKP…DPRIGSKKPI (73 aa). Over residues 22 to 32 the composition is skewed to basic and acidic residues; it reads NRTDRDVESRE. Residues 33–42 show a composition bias toward basic residues; that stretch reads IKRKRKRKGL. A compositionally biased stretch (basic and acidic residues) spans 55 to 67; sequence QARRNAQKKDPRI.

The protein belongs to the YihI family. Interacts with Der.

Functionally, a GTPase-activating protein (GAP) that modifies Der/EngA GTPase function. May play a role in ribosome biogenesis. This Aliivibrio fischeri (strain ATCC 700601 / ES114) (Vibrio fischeri) protein is Der GTPase-activating protein YihI.